Here is a 443-residue protein sequence, read N- to C-terminus: Glutamate--tRNA ligase 1 (443 aa).

The 'HIGH' region signature appears at 10–20 (PSPTGYIHVGN). Residues 241–245 (ALSKR) carry the 'KMSKS' region motif. Position 244 (Lys244) interacts with ATP.

Belongs to the class-I aminoacyl-tRNA synthetase family. Glutamate--tRNA ligase type 1 subfamily. In terms of assembly, monomer.

The protein localises to the cytoplasm. It catalyses the reaction tRNA(Glu) + L-glutamate + ATP = L-glutamyl-tRNA(Glu) + AMP + diphosphate. Its function is as follows. Catalyzes the attachment of glutamate to tRNA(Glu) in a two-step reaction: glutamate is first activated by ATP to form Glu-AMP and then transferred to the acceptor end of tRNA(Glu). The sequence is that of Glutamate--tRNA ligase 1 from Ruegeria pomeroyi (strain ATCC 700808 / DSM 15171 / DSS-3) (Silicibacter pomeroyi).